An 801-amino-acid chain; its full sequence is Zinc finger Y-chromosomal protein (801 aa).

The residue at position 270 (Ser270) is a Phosphoserine. Residues 421-443 (YPCMICGKKFKSRGFLKRHMKNH) form a C2H2-type 1 zinc finger. A C2H2-type 2; atypical zinc finger spans residues 452-474 (YHCTDCDYTTNKKISLHNHLESH). 11 C2H2-type zinc fingers span residues 484 to 506 (IECDECGKHFSHAGALFTHKMVH), 515 to 538 (HKCKFCEYETAEQGLLNRHLLAVH), 544 to 566 (HICVECGKGFRHPSELRKHMRIH), 572 to 595 (YQCQYCEYRSADSSNLKTHIKTKH), 601 to 623 (FKCDICLLTFSDTKEVQQHTLVH), 629 to 652 (HQCLHCDHKSSNSSDLKRHVISVH), 658 to 680 (HKCEMCEKGFHRPSELKKHVAVH), 686 to 709 (HQCRHCDFKIADPFVLSRHILSVH), 715 to 737 (FRCKRCRKGFRQQNELKKHMKTH), 743 to 766 (YQCEYCEYSTTDASGFKRHVISIH), and 772 to 795 (HRCEYCKKGFRRPSEKNQHIMRHH).

The protein belongs to the krueppel C2H2-type zinc-finger protein family. ZFX/ZFY subfamily.

It localises to the nucleus. In terms of biological role, probable transcriptional activator. Binds to the consensus sequence 5'-AGGCCY-3'. This is Zinc finger Y-chromosomal protein (ZFY) from Homo sapiens (Human).